Reading from the N-terminus, the 217-residue chain is Probable rhamnogalacturonan acetylesterase YesY (217 aa).

Ser11 (nucleophile) is an active-site residue. Residues Glu178 and His185 contribute to the active site.

This sequence belongs to the 'GDSL' lipolytic enzyme family.

In terms of biological role, may play a role in the degradation of rhamnogalacturonan derived from plant cell walls. Probably has broad substrate specificity and may degrade several types of acetylated substrates. The polypeptide is Probable rhamnogalacturonan acetylesterase YesY (yesY) (Bacillus subtilis (strain 168)).